A 94-amino-acid chain; its full sequence is MLNVNEYFAGKVKSIGFEGDGIGRASVGVMDAGEYTFGTGQPEEMTVITGALKVLLPGAPDWQVFTPGETFFVPGKSEFNLQVVEPTSYLCKYL.

It belongs to the nucleoside phosphorylase PpnP family.

The catalysed reaction is a purine D-ribonucleoside + phosphate = a purine nucleobase + alpha-D-ribose 1-phosphate. It catalyses the reaction adenosine + phosphate = alpha-D-ribose 1-phosphate + adenine. It carries out the reaction cytidine + phosphate = cytosine + alpha-D-ribose 1-phosphate. The enzyme catalyses guanosine + phosphate = alpha-D-ribose 1-phosphate + guanine. The catalysed reaction is inosine + phosphate = alpha-D-ribose 1-phosphate + hypoxanthine. It catalyses the reaction thymidine + phosphate = 2-deoxy-alpha-D-ribose 1-phosphate + thymine. It carries out the reaction uridine + phosphate = alpha-D-ribose 1-phosphate + uracil. The enzyme catalyses xanthosine + phosphate = alpha-D-ribose 1-phosphate + xanthine. Functionally, catalyzes the phosphorolysis of diverse nucleosides, yielding D-ribose 1-phosphate and the respective free bases. Can use uridine, adenosine, guanosine, cytidine, thymidine, inosine and xanthosine as substrates. Also catalyzes the reverse reactions. The protein is Pyrimidine/purine nucleoside phosphorylase of Pectobacterium carotovorum subsp. carotovorum (strain PC1).